Consider the following 430-residue polypeptide: Histidine--tRNA ligase (430 aa).

It belongs to the class-II aminoacyl-tRNA synthetase family. Homodimer.

It localises to the cytoplasm. The enzyme catalyses tRNA(His) + L-histidine + ATP = L-histidyl-tRNA(His) + AMP + diphosphate + H(+). The chain is Histidine--tRNA ligase from Chlorobaculum parvum (strain DSM 263 / NCIMB 8327) (Chlorobium vibrioforme subsp. thiosulfatophilum).